The following is a 356-amino-acid chain: MHIAVAVSGGTDSLFALLQVLEAGHQVTALHAHFLSPHDTPETTAHNTQAIEKACRALGADFHVEDLSAAFRKHVIEPFIDAYRQGRTPNPCARCNASMKFGLLADTARKLGAQAIATGHYARLQPDLPRPGNTVSLWRGDDPAKDQSYFLSLVPQHRLACAVFPLGGWRKQDVRAHLKQRGIVPPLPSESQEICFIPGDDYRAYLTAHAAGLPGAGPMVLRDGHVVGHHNGLWQYTEGQRRGLGIAWSEPLYVLEKDVSRNALVVGTRKQLTARGCRCVGVNTLVPPDQWPDAVYVKTRYRQTMIAAQVTPDADGADTMRVIFAASHTPPAAGQVAAVYDAAGRVLAGGIIASVF.

6–13 (AVSGGTDS) is an ATP binding site. Cys95 functions as the Nucleophile in the catalytic mechanism. Cys95 and Cys195 form a disulfide bridge. Gly119 provides a ligand contact to ATP. The interval 145–147 (KDQ) is interaction with tRNA. Cys195 functions as the Cysteine persulfide intermediate in the catalytic mechanism. The interaction with tRNA stretch occupies residues 300-301 (RY).

The protein belongs to the MnmA/TRMU family.

Its subcellular location is the cytoplasm. The enzyme catalyses S-sulfanyl-L-cysteinyl-[protein] + uridine(34) in tRNA + AH2 + ATP = 2-thiouridine(34) in tRNA + L-cysteinyl-[protein] + A + AMP + diphosphate + H(+). Functionally, catalyzes the 2-thiolation of uridine at the wobble position (U34) of tRNA, leading to the formation of s(2)U34. This Oleidesulfovibrio alaskensis (strain ATCC BAA-1058 / DSM 17464 / G20) (Desulfovibrio alaskensis) protein is tRNA-specific 2-thiouridylase MnmA.